Consider the following 260-residue polypeptide: Emerin (260 aa).

Position 1 is an N-acetylmethionine (Met1). The 45-residue stretch at 1-45 (MDDYAVLSDTELAAVLRQYNIPHGPILGSTRKLYEKKIFEYETQR) folds into the LEM domain. A phosphoserine mark is found at Ser8 and Ser29. Positions 46–224 (RRLSPPSSSS…PTAALGQDRQ (179 aa)) are interaction with F-actin. A Phosphoserine; by PKA modification is found at Ser49. Ser54, Ser69, Ser72, Ser88, Ser99, Ser142, Ser143, and Ser144 each carry phosphoserine. Tyr162 is subject to Phosphotyrosine. Residues 169–188 (RPISNVSRSSLGLSYYPRSS) form an interaction with CTNNB1 region. Residues Ser172, Ser175, and Ser177 each carry the phosphoserine modification. The segment at 184–206 (YPRSSTSSVSSSSSSPSSWLTRR) is disordered. Positions 187–201 (SSTSSVSSSSSSPSS) are enriched in low complexity. The helical transmembrane segment at 225–245 (VPLWGQLLLFLAFATFLLFVY) threads the bilayer.

As to quaternary structure, interacts with lamins A and C, BANF1, GMCL, BCLAF1 and YTHDC1/YT521. Interacts with TMEM43; the interaction retains emerin in the inner nuclear membrane. Interacts with ACTB, SPTAN1, F-actin, CTNNB1 and beta-tubulin. Interacts with SUN1 and SUN2. Interacts with TMEM201. Interacts with NEMP1.

It localises to the nucleus inner membrane. It is found in the nucleus outer membrane. Its function is as follows. Stabilizes and promotes the formation of a nuclear actin cortical network. Stimulates actin polymerization in vitro by binding and stabilizing the pointed end of growing filaments. Inhibits beta-catenin activity by preventing its accumulation in the nucleus. Acts by influencing the nuclear accumulation of beta-catenin through a CRM1-dependent export pathway. Links centrosomes to the nuclear envelope via a microtubule association. Required for proper localization of non-farnesylated prelamin-A/C. Together with NEMP1, contributes to nuclear envelope stiffness in germ cells. This is Emerin (Emd) from Rattus norvegicus (Rat).